Consider the following 208-residue polypeptide: Superoxide dismutase [Mn] 2 (208 aa).

Mn(2+)-binding residues include histidine 28, histidine 83, aspartate 165, and histidine 169.

The protein belongs to the iron/manganese superoxide dismutase family. In terms of assembly, homodimer. Mn(2+) serves as cofactor.

It catalyses the reaction 2 superoxide + 2 H(+) = H2O2 + O2. Functionally, destroys superoxide anion radicals which are normally produced within the cells and which are toxic to biological systems. The polypeptide is Superoxide dismutase [Mn] 2 (sodA2) (Bacillus anthracis).